Reading from the N-terminus, the 280-residue chain is Probable holocytochrome-c-type synthase (280 aa).

The segment at Met1 to Ser95 is disordered. HRM repeat units follow at residues Gln35–Pro40 and Ala56–Ala61.

It belongs to the cytochrome c-type heme lyase family.

The protein resides in the mitochondrion inner membrane. The enzyme catalyses holo-[cytochrome c] = apo-[cytochrome c] + heme b. Its function is as follows. Probable lyase that catalyzes the covalent linking of the heme group to the cytochrome C apoprotein to produce the mature functional cytochrome. This chain is Probable holocytochrome-c-type synthase (cchl-1), found in Caenorhabditis elegans.